The primary structure comprises 630 residues: 1-deoxy-D-xylulose-5-phosphate synthase (630 aa).

Thiamine diphosphate-binding positions include His72 and 113 to 115 (GHS). Asp144 serves as a coordination point for Mg(2+). Thiamine diphosphate-binding positions include 145-146 (GA), Asn173, Tyr284, and Glu367. Asn173 is a Mg(2+) binding site.

It belongs to the transketolase family. DXPS subfamily. In terms of assembly, homodimer. Mg(2+) is required as a cofactor. Requires thiamine diphosphate as cofactor.

It catalyses the reaction D-glyceraldehyde 3-phosphate + pyruvate + H(+) = 1-deoxy-D-xylulose 5-phosphate + CO2. The protein operates within metabolic intermediate biosynthesis; 1-deoxy-D-xylulose 5-phosphate biosynthesis; 1-deoxy-D-xylulose 5-phosphate from D-glyceraldehyde 3-phosphate and pyruvate: step 1/1. In terms of biological role, catalyzes the acyloin condensation reaction between C atoms 2 and 3 of pyruvate and glyceraldehyde 3-phosphate to yield 1-deoxy-D-xylulose-5-phosphate (DXP). The polypeptide is 1-deoxy-D-xylulose-5-phosphate synthase (Bacillus mycoides (strain KBAB4) (Bacillus weihenstephanensis)).